Consider the following 157-residue polypeptide: S-ribosylhomocysteine lyase (157 aa).

3 residues coordinate Fe cation: histidine 53, histidine 57, and cysteine 124.

It belongs to the LuxS family. Homodimer. The cofactor is Fe cation.

The catalysed reaction is S-(5-deoxy-D-ribos-5-yl)-L-homocysteine = (S)-4,5-dihydroxypentane-2,3-dione + L-homocysteine. In terms of biological role, involved in the synthesis of autoinducer 2 (AI-2) which is secreted by bacteria and is used to communicate both the cell density and the metabolic potential of the environment. The regulation of gene expression in response to changes in cell density is called quorum sensing. Catalyzes the transformation of S-ribosylhomocysteine (RHC) to homocysteine (HC) and 4,5-dihydroxy-2,3-pentadione (DPD). This is S-ribosylhomocysteine lyase from Borrelia garinii subsp. bavariensis (strain ATCC BAA-2496 / DSM 23469 / PBi) (Borreliella bavariensis).